A 563-amino-acid polypeptide reads, in one-letter code: Zinc finger protein 503 (563 aa).

Residues 1-10 are compositionally biased toward polar residues; that stretch reads MITSPSASRN. Disordered stretches follow at residues 1–48 and 101–226; these read MITS…PLRQ and SQIG…TSVS. 2 stretches are compositionally biased toward low complexity: residues 19–33 and 112–122; these read SSSSSSRNNSSAVAS and SKLSSVTSNGS. Over residues 174-194 the composition is skewed to polar residues; the sequence is ATCQPFTPRTGSPNSSTSASP. Basic and acidic residues predominate over residues 199-211; sequence GKGERDEKKDSDC. Positions 212-226 are enriched in polar residues; that stretch reads NKNCSSDGSAPTSVS. Residues 431 to 459 form a C2H2-type zinc finger; that stretch reads HVCNWVSANGPCDKRFSSSEELLNHLRTH.

This sequence belongs to the Elbow/Noc family. As to quaternary structure, interacts with nlz1.

The protein resides in the nucleus. Required for segmental gene expression during hindbrain development. May function as a transcriptional repressor. This is Zinc finger protein 503 (znf503) from Danio rerio (Zebrafish).